The primary structure comprises 354 residues: Isocitrate dehydrogenase [NAD] regulatory subunit A, mitochondrial (354 aa).

Residues S95, N97, R101, R111, and R132 each contribute to the substrate site. Mg(2+) contacts are provided by D219, D243, and D247. NADP(+)-binding positions include 276 to 282 (HGTAPDI) and N289.

The protein belongs to the isocitrate and isopropylmalate dehydrogenases family. Heterooligomer of catalytic and regulatory subunits. Mg(2+) serves as cofactor. Requires Mn(2+) as cofactor.

It is found in the mitochondrion. The enzyme catalyses D-threo-isocitrate + NAD(+) = 2-oxoglutarate + CO2 + NADH. Its function is as follows. Performs an essential role in the oxidative function of the citric acid cycle. The chain is Isocitrate dehydrogenase [NAD] regulatory subunit A, mitochondrial (idhA) from Dictyostelium discoideum (Social amoeba).